Reading from the N-terminus, the 462-residue chain is Argininosuccinate lyase (462 aa).

Belongs to the lyase 1 family. Argininosuccinate lyase subfamily.

It localises to the cytoplasm. It carries out the reaction 2-(N(omega)-L-arginino)succinate = fumarate + L-arginine. Its pathway is amino-acid biosynthesis; L-arginine biosynthesis; L-arginine from L-ornithine and carbamoyl phosphate: step 3/3. This is Argininosuccinate lyase from Caldicellulosiruptor bescii (strain ATCC BAA-1888 / DSM 6725 / KCTC 15123 / Z-1320) (Anaerocellum thermophilum).